We begin with the raw amino-acid sequence, 346 residues long: Partitioning defective 6 homolog alpha (346 aa).

Positions 1–116 (MARPQRTPAR…SNSLQRRKKG (116 aa)) are interaction with PRKCI and PRKCZ. The region spanning 15–95 (IVEVKSKFDA…PPLRLLVQKR (81 aa)) is the PB1 domain. Positions 126–253 (RTRPPLLISL…VTVKPANQRN (128 aa)) are interaction with PARD3 and CDC42. A Pseudo-CRIB domain is found at 133–150 (ISLPQDFRQVSSVIDVDL). The 94-residue stretch at 157–250 (RVRLHKHGSD…NLIVTVKPAN (94 aa)) folds into the PDZ domain. 2 disordered regions span residues 257-294 (RGASGRLTGPSSVGPGPTDPDSDDDNSDPVIENRHPPC) and 317-346 (GSSLPSLDSREQANSGWGNGMRGDVSGFSL). Serine 278 carries the phosphoserine modification. Residues 317–332 (GSSLPSLDSREQANSG) show a composition bias toward polar residues. A Phosphoserine modification is found at serine 345.

Belongs to the PAR6 family. In terms of assembly, interacts with PALS1 and CRB3. Interacts with PARD3. Interacts with GTP-bound forms of CDC42, RHOQ/TC10 and RAC1. Interacts with the N-terminal part of PRKCI and PRKCZ. Part of a complex with PARD3, CDC42 or RAC1 and PRKCI or PRKCZ. Part of a complex with LLGL1 and PRKCI. Interacts with MAP2K5. Interacts with TGFBR1; involved in TGF-beta induced epithelial to mesenchymal transition. Interacts with ECT2 ('Thr-359' phosphorylated form) and PRKCI. Interacts with DCTN1 and PCM1. Phosphorylated by the TGF-beta receptor. In terms of processing, ubiquitinated by the SCF(FBXO31) complex, leading to its proteasomal degradation.

The protein resides in the cytoplasm. It is found in the cell membrane. The protein localises to the cell junction. It localises to the tight junction. Its subcellular location is the cytoskeleton. The protein resides in the microtubule organizing center. It is found in the centrosome. The protein localises to the centriolar satellite. Its function is as follows. Adapter protein involved in asymmetrical cell division and cell polarization processes. Probably involved in the formation of epithelial tight junctions. Association with PARD3 may prevent the interaction of PARD3 with F11R/JAM1, thereby preventing tight junction assembly. The PARD6-PARD3 complex links GTP-bound Rho small GTPases to atypical protein kinase C proteins. Regulates centrosome organization and function. Essential for the centrosomal recruitment of key proteins that control centrosomal microtubule organization. The sequence is that of Partitioning defective 6 homolog alpha (Pard6a) from Rattus norvegicus (Rat).